The sequence spans 206 residues: Thymidylate kinase (206 aa).

10 to 17 (GIDGAGKS) contributes to the ATP binding site.

It belongs to the thymidylate kinase family.

It catalyses the reaction dTMP + ATP = dTDP + ADP. Its function is as follows. Phosphorylation of dTMP to form dTDP in both de novo and salvage pathways of dTTP synthesis. The protein is Thymidylate kinase (tmk) of Neisseria meningitidis serogroup A / serotype 4A (strain DSM 15465 / Z2491).